Consider the following 293-residue polypeptide: ATP synthase subunit a (293 aa).

The next 6 helical transmembrane spans lie at 40–60 (DSLF…WLAA), 98–118 (FVAP…ALDL), 151–171 (DLNV…YYGI), 188–208 (FHAH…LNLI), 225–245 (MFAG…WTGF), and 264–284 (AIFH…LTLV).

Belongs to the ATPase A chain family. As to quaternary structure, F-type ATPases have 2 components, CF(1) - the catalytic core - and CF(0) - the membrane proton channel. CF(1) has five subunits: alpha(3), beta(3), gamma(1), delta(1), epsilon(1). CF(0) has three main subunits: a(1), b(2) and c(9-12). The alpha and beta chains form an alternating ring which encloses part of the gamma chain. CF(1) is attached to CF(0) by a central stalk formed by the gamma and epsilon chains, while a peripheral stalk is formed by the delta and b chains.

The protein resides in the cell inner membrane. Its function is as follows. Key component of the proton channel; it plays a direct role in the translocation of protons across the membrane. This chain is ATP synthase subunit a, found in Bordetella avium (strain 197N).